We begin with the raw amino-acid sequence, 89 residues long: Small ribosomal subunit protein uS15 (89 aa).

Belongs to the universal ribosomal protein uS15 family. As to quaternary structure, part of the 30S ribosomal subunit. Forms a bridge to the 50S subunit in the 70S ribosome, contacting the 23S rRNA.

Its function is as follows. One of the primary rRNA binding proteins, it binds directly to 16S rRNA where it helps nucleate assembly of the platform of the 30S subunit by binding and bridging several RNA helices of the 16S rRNA. In terms of biological role, forms an intersubunit bridge (bridge B4) with the 23S rRNA of the 50S subunit in the ribosome. The polypeptide is Small ribosomal subunit protein uS15 (Chlamydia abortus (strain DSM 27085 / S26/3) (Chlamydophila abortus)).